Consider the following 112-residue polypeptide: Urocortin-2 (112 aa).

The first 22 residues, 1–22 (MTRCALLLLMVLMLGRVLVVPV), serve as a signal peptide directing secretion. Residues 23 to 70 (TPIPTFQLRPQNSPQTTPRPAASESPSAAPTWPWAAQSHCSPTRHPGS) constitute a propeptide that is removed on maturation. The segment at 27–66 (TFQLRPQNSPQTTPRPAASESPSAAPTWPWAAQSHCSPTR) is disordered. Over residues 38–58 (TTPRPAASESPSAAPTWPWAA) the composition is skewed to low complexity.

The protein belongs to the sauvagine/corticotropin-releasing factor/urotensin I family. Binds with high affinity to CRF receptors 2-alpha and 2-beta. Glycosylated.

Its subcellular location is the secreted. In terms of biological role, suppresses food intake, delays gastric emptying and decreases heat-induced edema. Might represent an endogenous ligand for maintaining homeostasis after stress. In Homo sapiens (Human), this protein is Urocortin-2 (UCN2).